A 157-amino-acid polypeptide reads, in one-letter code: Small ribosomal subunit protein uS13 (157 aa).

The protein belongs to the universal ribosomal protein uS13 family. Part of the 30S ribosomal subunit. Forms a loose heterodimer with protein S19. Forms two bridges to the 50S subunit in the 70S ribosome.

Its function is as follows. Located at the top of the head of the 30S subunit, it contacts several helices of the 16S rRNA. In the 70S ribosome it contacts the 23S rRNA (bridge B1a) and protein L5 of the 50S subunit (bridge B1b), connecting the 2 subunits; these bridges are implicated in subunit movement. The sequence is that of Small ribosomal subunit protein uS13 from Thermofilum pendens (strain DSM 2475 / Hrk 5).